The primary structure comprises 130 residues: Phosphoribosyl-AMP cyclohydrolase (130 aa).

Mg(2+) is bound at residue Asp77. Cys78 lines the Zn(2+) pocket. Residues Asp79 and Asp81 each contribute to the Mg(2+) site. Zn(2+)-binding residues include Cys95 and Cys102.

This sequence belongs to the PRA-CH family. Homodimer. Mg(2+) is required as a cofactor. Requires Zn(2+) as cofactor.

It is found in the cytoplasm. It carries out the reaction 1-(5-phospho-beta-D-ribosyl)-5'-AMP + H2O = 1-(5-phospho-beta-D-ribosyl)-5-[(5-phospho-beta-D-ribosylamino)methylideneamino]imidazole-4-carboxamide. It functions in the pathway amino-acid biosynthesis; L-histidine biosynthesis; L-histidine from 5-phospho-alpha-D-ribose 1-diphosphate: step 3/9. Functionally, catalyzes the hydrolysis of the adenine ring of phosphoribosyl-AMP. The polypeptide is Phosphoribosyl-AMP cyclohydrolase (Pseudomonas syringae pv. tomato (strain ATCC BAA-871 / DC3000)).